Here is a 341-residue protein sequence, read N- to C-terminus: Protein huluwa (341 aa).

Residues 1–36 (MVTLSPAYLPSDGGTQAASAAPSVEENWVVQPSLTL) lie on the Extracellular side of the membrane. A helical transmembrane segment spans residues 37–57 (LVLLLVPCVLLLFFLNCFLLF). Residues 58–341 (HRLPAFSLRK…PMMCSKQYWI (284 aa)) lie on the Cytoplasmic side of the membrane. The VPPNSP motif signature appears at 206-211 (VPPNTP).

Belongs to the huluwa family. Interacts with axin1; leading to promote the tankyrase-mediated degradation of axin. Interacts with axin2; leading to promote the tankyrase-mediated degradation of axin.

The protein resides in the cell membrane. In terms of biological role, key maternal determinant of the dorsal organizer and body axis formation in vertebrates that acts by promoting stabilization of beta-catenin (ctnnb1). Localizes on the plasma membrane of the future dorsal blastomeres in early blastulas and binds to and promotes the tankyrase-mediated degradation of axin (axin1 and axin2). Axin degradation results in stabilization and nuclear translocation of beta-catenin (ctnnb1) for activating organizer-specific target gene expression. The polypeptide is Protein huluwa (Xenopus laevis (African clawed frog)).